Reading from the N-terminus, the 244-residue chain is Phosphoadenosine 5'-phosphosulfate reductase (244 aa).

Cys239 acts as the Nucleophile; cysteine thiosulfonate intermediate in catalysis.

Belongs to the PAPS reductase family. CysH subfamily.

It is found in the cytoplasm. The enzyme catalyses [thioredoxin]-disulfide + sulfite + adenosine 3',5'-bisphosphate + 2 H(+) = [thioredoxin]-dithiol + 3'-phosphoadenylyl sulfate. It functions in the pathway sulfur metabolism; hydrogen sulfide biosynthesis; sulfite from sulfate: step 3/3. Functionally, catalyzes the formation of sulfite from phosphoadenosine 5'-phosphosulfate (PAPS) using thioredoxin as an electron donor. This Shigella boydii serotype 4 (strain Sb227) protein is Phosphoadenosine 5'-phosphosulfate reductase.